The sequence spans 74 residues: Fulgimotoxin (74 aa).

Gln1 is modified (pyrrolidone carboxylic acid). Cystine bridges form between Cys10–Cys34, Cys13–Cys21, Cys27–Cys51, Cys55–Cys66, and Cys67–Cys72.

It belongs to the three-finger toxin family. Ancestral subfamily. Boigatoxin sub-subfamily. As to quaternary structure, monomer. The N-terminus is blocked. Post-translationally, contains 5 disulfide bonds. In terms of tissue distribution, expressed by the venom gland.

It is found in the secreted. Reptile-specific three-finger toxin that is lethal at low doses for lizards, but not for mice. Probably acts as a neurotoxin. The protein is Fulgimotoxin of Oxybelis fulgidus (Green vine snake).